Reading from the N-terminus, the 392-residue chain is ATP phosphoribosyltransferase regulatory subunit (392 aa).

Belongs to the class-II aminoacyl-tRNA synthetase family. HisZ subfamily. In terms of assembly, heteromultimer composed of HisG and HisZ subunits.

Its subcellular location is the cytoplasm. It participates in amino-acid biosynthesis; L-histidine biosynthesis; L-histidine from 5-phospho-alpha-D-ribose 1-diphosphate: step 1/9. Its function is as follows. Required for the first step of histidine biosynthesis. May allow the feedback regulation of ATP phosphoribosyltransferase activity by histidine. This Geobacillus sp. (strain WCH70) protein is ATP phosphoribosyltransferase regulatory subunit.